Here is a 501-residue protein sequence, read N- to C-terminus: Lysine--tRNA ligase (501 aa).

The Mg(2+) site is built by Glu411 and Glu418.

It belongs to the class-II aminoacyl-tRNA synthetase family. Homodimer. Mg(2+) is required as a cofactor.

It localises to the cytoplasm. It catalyses the reaction tRNA(Lys) + L-lysine + ATP = L-lysyl-tRNA(Lys) + AMP + diphosphate. This Aliivibrio fischeri (strain ATCC 700601 / ES114) (Vibrio fischeri) protein is Lysine--tRNA ligase.